Here is a 514-residue protein sequence, read N- to C-terminus: 2,3-bisphosphoglycerate-independent phosphoglycerate mutase (514 aa).

Mn(2+) is bound by residues Asp14 and Ser64. Catalysis depends on Ser64, which acts as the Phosphoserine intermediate. Substrate contacts are provided by residues His125, 155 to 156 (RD), Arg187, Arg193, 263 to 266 (RADR), and Lys336. 5 residues coordinate Mn(2+): Asp403, His407, Asp444, His445, and His463.

It belongs to the BPG-independent phosphoglycerate mutase family. Monomer. Mn(2+) serves as cofactor.

It carries out the reaction (2R)-2-phosphoglycerate = (2R)-3-phosphoglycerate. It participates in carbohydrate degradation; glycolysis; pyruvate from D-glyceraldehyde 3-phosphate: step 3/5. Its function is as follows. Catalyzes the interconversion of 2-phosphoglycerate and 3-phosphoglycerate. In Shewanella sp. (strain W3-18-1), this protein is 2,3-bisphosphoglycerate-independent phosphoglycerate mutase.